Consider the following 274-residue polypeptide: 2,3,4,5-tetrahydropyridine-2,6-dicarboxylate N-succinyltransferase (274 aa).

2 residues coordinate substrate: arginine 106 and aspartate 143.

It belongs to the transferase hexapeptide repeat family. In terms of assembly, homotrimer.

The protein localises to the cytoplasm. The catalysed reaction is (S)-2,3,4,5-tetrahydrodipicolinate + succinyl-CoA + H2O = (S)-2-succinylamino-6-oxoheptanedioate + CoA. Its pathway is amino-acid biosynthesis; L-lysine biosynthesis via DAP pathway; LL-2,6-diaminopimelate from (S)-tetrahydrodipicolinate (succinylase route): step 1/3. The sequence is that of 2,3,4,5-tetrahydropyridine-2,6-dicarboxylate N-succinyltransferase from Rickettsia felis (strain ATCC VR-1525 / URRWXCal2) (Rickettsia azadi).